A 513-amino-acid polypeptide reads, in one-letter code: Bifunctional purine biosynthesis protein PurH (513 aa).

Residues 1-144 (MKRALVSVSD…KNYRDVTIVV (144 aa)) form the MGS-like domain.

It belongs to the PurH family.

The catalysed reaction is (6R)-10-formyltetrahydrofolate + 5-amino-1-(5-phospho-beta-D-ribosyl)imidazole-4-carboxamide = 5-formamido-1-(5-phospho-D-ribosyl)imidazole-4-carboxamide + (6S)-5,6,7,8-tetrahydrofolate. It catalyses the reaction IMP + H2O = 5-formamido-1-(5-phospho-D-ribosyl)imidazole-4-carboxamide. It participates in purine metabolism; IMP biosynthesis via de novo pathway; 5-formamido-1-(5-phospho-D-ribosyl)imidazole-4-carboxamide from 5-amino-1-(5-phospho-D-ribosyl)imidazole-4-carboxamide (10-formyl THF route): step 1/1. Its pathway is purine metabolism; IMP biosynthesis via de novo pathway; IMP from 5-formamido-1-(5-phospho-D-ribosyl)imidazole-4-carboxamide: step 1/1. The sequence is that of Bifunctional purine biosynthesis protein PurH from Lactobacillus delbrueckii subsp. bulgaricus (strain ATCC BAA-365 / Lb-18).